The chain runs to 288 residues: Alpha/beta hydrolase domain-containing protein 17B (288 aa).

Active-site charge relay system residues include serine 170, aspartate 235, and histidine 264. Serine 282 is subject to Phosphoserine.

Belongs to the AB hydrolase superfamily. ABHD17 family. Palmitoylated on cysteine residues located in a cysteine cluster at the N-terminus which promotes membrane localization. Palmitoylation is required for post-synaptic localization and for depalmitoylating activity towards DLG4/PSD95.

It localises to the cell membrane. The protein resides in the recycling endosome membrane. Its subcellular location is the cell projection. It is found in the dendritic spine. The protein localises to the postsynaptic density membrane. The catalysed reaction is S-hexadecanoyl-L-cysteinyl-[protein] + H2O = L-cysteinyl-[protein] + hexadecanoate + H(+). Its activity is regulated as follows. Inhibited by palmostatin-B. Hydrolyzes fatty acids from S-acylated cysteine residues in proteins. Has depalmitoylating activity towards DLG4/PSD95. Has depalmitoylating activity towards GAP43. Has depalmitoylating activity towards MAP6. Has depalmitoylating activity towards NRAS. This Homo sapiens (Human) protein is Alpha/beta hydrolase domain-containing protein 17B.